The sequence spans 731 residues: Ribonuclease R (731 aa).

The region spanning 260 to 589 (RTDLRHFPFF…LHRVIKYLLF (330 aa)) is the RNB domain. One can recognise an S1 motif domain in the interval 647–728 (GCILNGVISN…NEKKIELSLY (82 aa)).

The protein belongs to the RNR ribonuclease family. RNase R subfamily. As to quaternary structure, monomer.

The protein resides in the cytoplasm. The catalysed reaction is Exonucleolytic cleavage in the 3'- to 5'-direction to yield nucleoside 5'-phosphates.. 3'-5' exoribonuclease that releases 5'-nucleoside monophosphates and is involved in maturation of structured RNAs. This chain is Ribonuclease R, found in Buchnera aphidicola subsp. Acyrthosiphon pisum (strain APS) (Acyrthosiphon pisum symbiotic bacterium).